A 399-amino-acid chain; its full sequence is 26S proteasome regulatory subunit 10B homolog A (399 aa).

Threonine 2 bears the N-acetylthreonine mark. ATP is bound at residue 180-187; the sequence is GPPGTGKT. A Glycyl lysine isopeptide (Lys-Gly) (interchain with G-Cter in ubiquitin) cross-link involves residue lysine 203.

Belongs to the AAA ATPase family. Component of the 19S regulatory particle (RP/PA700) base subcomplex of the 26S proteasome. The 26S proteasome is composed of a core protease (CP), known as the 20S proteasome, capped at one or both ends by the 19S regulatory particle (RP/PA700). The RP/PA700 complex is composed of at least 17 different subunits in two subcomplexes, the base and the lid, which form the portions proximal and distal to the 20S proteolytic core, respectively.

It is found in the cytoplasm. Its subcellular location is the nucleus. Its function is as follows. The 26S proteasome is involved in the ATP-dependent degradation of ubiquitinated proteins. The regulatory (or ATPase) complex confers ATP dependency and substrate specificity to the 26S complex. The polypeptide is 26S proteasome regulatory subunit 10B homolog A (RPT4A) (Arabidopsis thaliana (Mouse-ear cress)).